The primary structure comprises 367 residues: Quinolinate synthase (367 aa).

Residues histidine 46 and serine 63 each coordinate iminosuccinate. Cysteine 110 is a [4Fe-4S] cluster binding site. Iminosuccinate-binding positions include 141–143 and serine 162; that span reads YVN. Residue cysteine 229 participates in [4Fe-4S] cluster binding. Residues 255–257 and threonine 272 each bind iminosuccinate; that span reads HPE. Cysteine 319 provides a ligand contact to [4Fe-4S] cluster.

This sequence belongs to the quinolinate synthase family. Type 3 subfamily. It depends on [4Fe-4S] cluster as a cofactor.

Its subcellular location is the cytoplasm. The catalysed reaction is iminosuccinate + dihydroxyacetone phosphate = quinolinate + phosphate + 2 H2O + H(+). Its pathway is cofactor biosynthesis; NAD(+) biosynthesis; quinolinate from iminoaspartate: step 1/1. In terms of biological role, catalyzes the condensation of iminoaspartate with dihydroxyacetone phosphate to form quinolinate. The sequence is that of Quinolinate synthase from Bacillus velezensis (strain DSM 23117 / BGSC 10A6 / LMG 26770 / FZB42) (Bacillus amyloliquefaciens subsp. plantarum).